We begin with the raw amino-acid sequence, 380 residues long: Cytochrome b (380 aa).

4 helical membrane passes run 34–54, 78–99, 114–134, and 179–199; these read FGSL…FLAM, WLLR…YMHI, WNIG…GYVL, and FFAF…VHLL. Positions 84 and 98 each coordinate heme b. Heme b contacts are provided by histidine 183 and histidine 197. An a ubiquinone-binding site is contributed by histidine 202. 4 consecutive transmembrane segments (helical) span residues 227–247, 289–309, 321–341, and 348–368; these read YKDV…ALFS, LGGV…PFVH, LAQV…WLGG, and YIFL…LFIP.

Belongs to the cytochrome b family. As to quaternary structure, the cytochrome bc1 complex contains 3 respiratory subunits (MT-CYB, CYC1 and UQCRFS1), 2 core proteins (UQCRC1 and UQCRC2) and probably 6 low-molecular weight proteins. Requires heme b as cofactor.

The protein resides in the mitochondrion inner membrane. Its function is as follows. Component of the ubiquinol-cytochrome c reductase complex (complex III or cytochrome b-c1 complex) that is part of the mitochondrial respiratory chain. The b-c1 complex mediates electron transfer from ubiquinol to cytochrome c. Contributes to the generation of a proton gradient across the mitochondrial membrane that is then used for ATP synthesis. In Branchiostoma lanceolatum (Common lancelet), this protein is Cytochrome b (MT-CYB).